A 390-amino-acid chain; its full sequence is F-box/kelch-repeat protein At3g04660 (390 aa).

Positions 18-67 (YDPSSILPLELKIEILMKSPPKSIAKLGFVSNHWSSIIRGQVFTDLYMRR) constitute an F-box domain. Kelch repeat units lie at residues 115–161 (FSPP…FGYD) and 272–323 (MVDH…DQRV).

In terms of assembly, part of a SCF (ASK-cullin-F-box) protein ligase complex. Interacts with SKP1A/ASK1, SKP1B/ASK2, ASK11 and ASK13.

The protein resides in the nucleus. It functions in the pathway protein modification; protein ubiquitination. Its function is as follows. Component of SCF(ASK-cullin-F-box) E3 ubiquitin ligase complexes, which may mediate the ubiquitination and subsequent proteasomal degradation of target proteins. The protein is F-box/kelch-repeat protein At3g04660 of Arabidopsis thaliana (Mouse-ear cress).